A 312-amino-acid polypeptide reads, in one-letter code: Malate dehydrogenase (312 aa).

Residues 7–13 (GAAGGIG) and Asp-34 each bind NAD(+). Substrate contacts are provided by Arg-81 and Arg-87. NAD(+)-binding positions include Asn-94 and 117–119 (ITN). Substrate contacts are provided by Asn-119 and Arg-153. His-177 serves as the catalytic Proton acceptor. Position 227 (Met-227) interacts with NAD(+).

The protein belongs to the LDH/MDH superfamily. MDH type 1 family. As to quaternary structure, homodimer.

The catalysed reaction is (S)-malate + NAD(+) = oxaloacetate + NADH + H(+). In terms of biological role, catalyzes the reversible oxidation of malate to oxaloacetate. This Moritella sp. (strain 2D2) protein is Malate dehydrogenase (mdh).